The sequence spans 231 residues: Uridylate cyclase (231 aa).

One can recognise a Guanylate cyclase domain in the interval 46 to 178; sequence TVLYADLDGS…RAANYAAKLT (133 aa). Residue Tyr-49 coordinates a ribonucleoside 5'-triphosphate. The Mn(2+) site is built by Asp-51 and Asp-95. Arg-96 is an a ribonucleoside 5'-triphosphate binding site.

This sequence belongs to the adenylyl cyclase class-4/guanylyl cyclase family. Pyrimidine cyclase subfamily. Homodimer. Mn(2+) serves as cofactor.

It is found in the cytoplasm. The enzyme catalyses UTP = 3',5'-cyclic UMP + diphosphate. Pycsar (pyrimidine cyclase system for antiphage resistance) provides immunity against bacteriophage. The pyrimidine cyclase (PycC) synthesizes cyclic nucleotides in response to infection; these serve as specific second messenger signals. The signal activates the adjacent effector, leading to bacterial cell death and abortive phage infection. A clade B Pycsar system. In terms of biological role, the pyrimidine cyclase gene of a two-gene Pycsar system, generates cyclic UMP (cUMP) from UTP probably in response to bacteriophage infection. Expression of this and adjacent effector XpPycTIR (AC P0DV29) confers resistance to bacteriophage T7. When cells expressing the Pycsar system are infected phage T7 at low multiplicity of infection (0.2 MOI) the culture survives, at 2.0 MOI bacteria enter growth arrest. The same cells enter growth arrest after exposure to 2.5 mM cUMP but not cCMP; the effector protein responds only to the cUMP produced by its cognate NTP cyclase. The protein is Uridylate cyclase of Xanthomonas perforans.